The chain runs to 225 residues: PKHD-type hydroxylase KPK_3192 (225 aa).

The 100-residue stretch at 78 to 177 folds into the Fe2OG dioxygenase domain; sequence TISAPLFNRY…RQASFLWIQS (100 aa). Residues His-96, Asp-98, and His-158 each coordinate Fe cation. 2-oxoglutarate is bound at residue Arg-168.

It depends on Fe(2+) as a cofactor. The cofactor is L-ascorbate.

The sequence is that of PKHD-type hydroxylase KPK_3192 from Klebsiella pneumoniae (strain 342).